Here is a 234-residue protein sequence, read N- to C-terminus: Leucyl/phenylalanyl-tRNA--protein transferase (234 aa).

This sequence belongs to the L/F-transferase family.

The protein resides in the cytoplasm. The catalysed reaction is N-terminal L-lysyl-[protein] + L-leucyl-tRNA(Leu) = N-terminal L-leucyl-L-lysyl-[protein] + tRNA(Leu) + H(+). The enzyme catalyses N-terminal L-arginyl-[protein] + L-leucyl-tRNA(Leu) = N-terminal L-leucyl-L-arginyl-[protein] + tRNA(Leu) + H(+). It carries out the reaction L-phenylalanyl-tRNA(Phe) + an N-terminal L-alpha-aminoacyl-[protein] = an N-terminal L-phenylalanyl-L-alpha-aminoacyl-[protein] + tRNA(Phe). Functions in the N-end rule pathway of protein degradation where it conjugates Leu, Phe and, less efficiently, Met from aminoacyl-tRNAs to the N-termini of proteins containing an N-terminal arginine or lysine. The protein is Leucyl/phenylalanyl-tRNA--protein transferase of Salmonella arizonae (strain ATCC BAA-731 / CDC346-86 / RSK2980).